The primary structure comprises 125 residues: Probable 4-amino-4-deoxy-L-arabinose-phosphoundecaprenol flippase subunit ArnF (125 aa).

The Cytoplasmic segment spans residues 1 to 2 (MG). The helical transmembrane segment at 3 to 23 (VMWGLISVAIASLAQLSLGFA) threads the bilayer. The Periplasmic portion of the chain corresponds to 24–33 (MMRLPSIAHP). The helical transmembrane segment at 34-54 (LAFISGLGALNAATLALFAGL) threads the bilayer. Topologically, residues 55-76 (AGYLVSVFCWHKTLHTLALSKA) are cytoplasmic. A helical transmembrane segment spans residues 77–97 (YALLSLSYVLVWVASMLLPGL). Topologically, residues 98–100 (QGA) are periplasmic. The helical transmembrane segment at 101-121 (FSLKAMLGVLCIMAGVMLIFL) threads the bilayer. Over 122-125 (PARS) the chain is Cytoplasmic.

The protein belongs to the ArnF family. As to quaternary structure, heterodimer of ArnE and ArnF.

The protein resides in the cell inner membrane. It functions in the pathway bacterial outer membrane biogenesis; lipopolysaccharide biosynthesis. In terms of biological role, translocates 4-amino-4-deoxy-L-arabinose-phosphoundecaprenol (alpha-L-Ara4N-phosphoundecaprenol) from the cytoplasmic to the periplasmic side of the inner membrane. The protein is Probable 4-amino-4-deoxy-L-arabinose-phosphoundecaprenol flippase subunit ArnF of Salmonella agona (strain SL483).